We begin with the raw amino-acid sequence, 117 residues long: Large ribosomal subunit protein uL18 (117 aa).

It belongs to the universal ribosomal protein uL18 family. In terms of assembly, part of the 50S ribosomal subunit; part of the 5S rRNA/L5/L18/L25 subcomplex. Contacts the 5S and 23S rRNAs.

Functionally, this is one of the proteins that bind and probably mediate the attachment of the 5S RNA into the large ribosomal subunit, where it forms part of the central protuberance. This chain is Large ribosomal subunit protein uL18, found in Vibrio cholerae serotype O1 (strain ATCC 39541 / Classical Ogawa 395 / O395).